The following is a 246-amino-acid chain: MHPVINFSHVTKEYPLYHHIGSGIKDLIFHPKRAFQLLKGRKYLAIEDVSFTVGKGEAVALIGRNGAGKSTSLGLVAGVIKPTKGTVTTEGRVASMLELGGGFHPELTGRENIYLNATLLGLRRKEVQQRMERIIEFSELGEFIDEPIRVYSSGMLAKLGFSVISQVEPDILIIDEVLAVGDIAFQAKCIQTIRDFKKRGVTILFVSHNMSDVEKICDRVIWIENHRLREVGSAERIIELYKQAMA.

The 225-residue stretch at 22–246 (SGIKDLIFHP…IIELYKQAMA (225 aa)) folds into the ABC transporter domain. 63-70 (GRNGAGKS) is a binding site for ATP.

It belongs to the ABC transporter superfamily.

It is found in the cell inner membrane. In terms of biological role, may form an ATP-driven O-antigen export apparatus, in association with RfbA. The protein is O-antigen export system ATP-binding protein RfbB (rfbB) of Klebsiella pneumoniae.